The sequence spans 594 residues: (E)-beta-ocimene synthase TPS6FN (594 aa).

The (2E)-geranyl diphosphate site is built by Arg-303, Asp-340, Asp-344, Arg-489, and Asn-492. Residues Asp-340 and Asp-344 each coordinate Mg(2+). The short motif at 340-344 (DDIYD) is the DDXXD motif element. Mg(2+) is bound by residues Asn-492, Thr-496, and Glu-500.

It belongs to the terpene synthase family. Tpsb subfamily. It depends on Mg(2+) as a cofactor. Requires Mn(2+) as cofactor. In terms of tissue distribution, expressed in glandular trichomes two to four weeks after flowering onset.

It catalyses the reaction (2E)-geranyl diphosphate = (E)-beta-ocimene + diphosphate. The enzyme catalyses (2E)-geranyl diphosphate = (Z)-beta-ocimene + diphosphate. Its pathway is secondary metabolite biosynthesis; terpenoid biosynthesis. In terms of biological role, involved in monoterpene (C10) olefins biosynthesis, constituants of cannabinoids and terpenoids-rich resins. Catalyzes mainly the conversion of (2E)-geranyl diphosphate to (E)-beta-ocimene, and also produces minor products such as (Z)-beta-ocimene. This is (E)-beta-ocimene synthase TPS6FN from Cannabis sativa (Hemp).